Consider the following 396-residue polypeptide: S-adenosylmethionine synthase (396 aa).

Residue His15 coordinates ATP. Position 17 (Asp17) interacts with Mg(2+). Glu43 contacts K(+). Glu56 and Gln99 together coordinate L-methionine. Residues 99–109 (QSADIALGVDR) form a flexible loop region. ATP contacts are provided by residues 175–177 (DGK), 241–242 (RF), Asp250, 256–257 (RK), Ala273, and Lys277. Asp250 is a binding site for L-methionine. Lys281 is an L-methionine binding site.

This sequence belongs to the AdoMet synthase family. As to quaternary structure, homotetramer; dimer of dimers. Mg(2+) serves as cofactor. K(+) is required as a cofactor.

The protein localises to the cytoplasm. It catalyses the reaction L-methionine + ATP + H2O = S-adenosyl-L-methionine + phosphate + diphosphate. The protein operates within amino-acid biosynthesis; S-adenosyl-L-methionine biosynthesis; S-adenosyl-L-methionine from L-methionine: step 1/1. Catalyzes the formation of S-adenosylmethionine (AdoMet) from methionine and ATP. The overall synthetic reaction is composed of two sequential steps, AdoMet formation and the subsequent tripolyphosphate hydrolysis which occurs prior to release of AdoMet from the enzyme. In Desulfitobacterium hafniense (strain DSM 10664 / DCB-2), this protein is S-adenosylmethionine synthase.